Here is a 1116-residue protein sequence, read N- to C-terminus: Ubiquitin C-terminal hydrolase 12 (1116 aa).

The span at 1 to 10 (MTMMTPPPVD) shows a compositional bias: pro residues. The interval 1–52 (MTMMTPPPVDQPEDEEMLVPNSDLVDGPAQPMEVTQPETAASTVENQPAEDP) is disordered. Positions 36 to 46 (QPETAASTVEN) are enriched in polar residues. An MATH domain is found at 54-179 (TLKFTWTIPN…NDTVLVEAEV (126 aa)). The USP domain maps to 199–524 (VGLKNQGATC…NAYMLVYIRE (326 aa)). Cys208 (nucleophile) is an active-site residue. His455 functions as the Proton acceptor in the catalytic mechanism.

Belongs to the peptidase C19 family. In terms of assembly, interacts with SIC/RON3.

The catalysed reaction is Thiol-dependent hydrolysis of ester, thioester, amide, peptide and isopeptide bonds formed by the C-terminal Gly of ubiquitin (a 76-residue protein attached to proteins as an intracellular targeting signal).. Functionally, recognizes and hydrolyzes the peptide bond at the C-terminal Gly of ubiquitin. Involved in the processing of poly-ubiquitin precursors as well as that of ubiquitinated proteins. Positive regulator of root meristem development that, together with UBP13, prevents the ubiquitination and turnover of RGFR1 induced by the RGF1 hormone peptide, thus influencing PLT1 and PLT2 expression. In Arabidopsis thaliana (Mouse-ear cress), this protein is Ubiquitin C-terminal hydrolase 12.